Reading from the N-terminus, the 224-residue chain is GrpE protein homolog 2, mitochondrial (224 aa).

The N-terminal 31 residues, 1–31, are a transit peptide targeting the mitochondrion; the sequence is MAARSLWAVQRLQRLLASGAMSESRGWLHPF. Residue Lys141 is modified to N6-acetyllysine.

This sequence belongs to the GrpE family. As to quaternary structure, probable component of the PAM complex at least composed of a mitochondrial HSP70 protein, GRPEL1 or GRPEL2, TIMM44, TIMM16/PAM16 and TIMM14/DNAJC19. Ubiquitous.

The protein resides in the mitochondrion matrix. Its function is as follows. Essential component of the PAM complex, a complex required for the translocation of transit peptide-containing proteins from the inner membrane into the mitochondrial matrix in an ATP-dependent manner. Seems to control the nucleotide-dependent binding of mitochondrial HSP70 to substrate proteins. Stimulates ATPase activity of mt-HSP70. May also serve to modulate the interconversion of oligomeric (inactive) and monomeric (active) forms of mt-HSP70. This is GrpE protein homolog 2, mitochondrial (Grpel2) from Mus musculus (Mouse).